The sequence spans 78 residues: Large ribosomal subunit protein eL20 (78 aa).

Belongs to the eukaryotic ribosomal protein eL20 family. In terms of assembly, part of the 50S ribosomal subunit. Binds 23S rRNA.

This Pyrobaculum neutrophilum (strain DSM 2338 / JCM 9278 / NBRC 100436 / V24Sta) (Thermoproteus neutrophilus) protein is Large ribosomal subunit protein eL20.